Reading from the N-terminus, the 491-residue chain is MNTQQLAKLRTIVPEMRRVRHIHFVGIGGAGMGGIAEVLANEGYQISGSDLAPNPVTQHLTSLGAQIYFHHRPENVLDASVVVVSTAISADNPEIVAAREARIPVIRRAEMLAELMRFRHGIAVAGTHGKTTTTAMVSSIYAEAGLDPTFVNGGLVKAAGTHARLGSSRYLIAEADESDASFLHLQPMVAIVTNIEADHMDTYQGDFENLKQTFINFLHNLPFYGRAVMCIDDPVVRELLPRVGRHITTYGFSDDADVQIASYRQEGPQGHFTLKRLDKPLMTVTLNAPGRHNALNAAAAVAVATEEGIEDNDILRALAGFQGTGRRFDFLGNFPLAPVNGKEGSAMLVDDYGHHPTEVDATIKAARAGWPDKRIVMVFQPHRYTRTRDLYDDFANVLSQVDVLLMLDVYAAGEPPIPGADSRSLCRTIRNRGKLDPILVSDSETVPEVLAQVLNGDDLILVQGAGNIGKIARKLAELKLQPQTKDEEHHG.

Residue 126–132 (GTHGKTT) coordinates ATP.

Belongs to the MurCDEF family.

It localises to the cytoplasm. The catalysed reaction is UDP-N-acetyl-alpha-D-muramate + L-alanine + ATP = UDP-N-acetyl-alpha-D-muramoyl-L-alanine + ADP + phosphate + H(+). The protein operates within cell wall biogenesis; peptidoglycan biosynthesis. Its function is as follows. Cell wall formation. The protein is UDP-N-acetylmuramate--L-alanine ligase of Yersinia enterocolitica serotype O:8 / biotype 1B (strain NCTC 13174 / 8081).